Here is a 367-residue protein sequence, read N- to C-terminus: Phosphoribosylaminoimidazole-succinocarboxamide synthase (367 aa).

Belongs to the SAICAR synthetase family.

It carries out the reaction 5-amino-1-(5-phospho-D-ribosyl)imidazole-4-carboxylate + L-aspartate + ATP = (2S)-2-[5-amino-1-(5-phospho-beta-D-ribosyl)imidazole-4-carboxamido]succinate + ADP + phosphate + 2 H(+). It participates in purine metabolism; IMP biosynthesis via de novo pathway; 5-amino-1-(5-phospho-D-ribosyl)imidazole-4-carboxamide from 5-amino-1-(5-phospho-D-ribosyl)imidazole-4-carboxylate: step 1/2. This Colwellia psychrerythraea (strain 34H / ATCC BAA-681) (Vibrio psychroerythus) protein is Phosphoribosylaminoimidazole-succinocarboxamide synthase.